The following is a 306-amino-acid chain: Glutaminase (306 aa).

Substrate-binding residues include S66, N116, E159, N166, Y190, Y242, and V260.

The protein belongs to the glutaminase family. In terms of assembly, homotetramer.

It catalyses the reaction L-glutamine + H2O = L-glutamate + NH4(+). This is Glutaminase from Caulobacter vibrioides (strain ATCC 19089 / CIP 103742 / CB 15) (Caulobacter crescentus).